We begin with the raw amino-acid sequence, 473 residues long: NAD-dependent protein deacetylase SRT1 (473 aa).

The region spanning 27–267 (SHLLQCKIEE…AGVMESLNMK (241 aa)) is the Deacetylase sirtuin-type domain. NAD(+) is bound by residues 52 to 71 (GAGISTSCGIPDFRGPKGIW) and 114 to 117 (QNVD). The Proton acceptor role is filled by His-134. Zn(2+) contacts are provided by Cys-142, Cys-145, Cys-167, and Cys-172. NAD(+) contacts are provided by residues 209 to 211 (GTS), 235 to 237 (NLQ), and Val-253. The interval 447-473 (LEGSGTSRKRSRTGKRKSKALAEETKA) is disordered. Residues 453–465 (SRKRSRTGKRKSK) are compositionally biased toward basic residues.

It belongs to the sirtuin family. Class IV subfamily. Binds to the promoter region of genes influenced by ethylene. Interacts with ENAP1; this interaction is enhanced in the presence of ethylene. It depends on Zn(2+) as a cofactor.

The protein localises to the nucleus. It catalyses the reaction N(6)-acetyl-L-lysyl-[protein] + NAD(+) + H2O = 2''-O-acetyl-ADP-D-ribose + nicotinamide + L-lysyl-[protein]. NAD-dependent protein deacetylase. Has deacetylase activity towards H3K9Ac. May have a function in the safeguard against genome instability and DNA damage to ensure plant cell growth. Involved in responses to ethylene leading to the transcriptional repression of some ethylene-responsive genes via the regulation of histone acetylation H3K9Ac. The chain is NAD-dependent protein deacetylase SRT1 from Arabidopsis thaliana (Mouse-ear cress).